A 30-amino-acid chain; its full sequence is Glucagon-like peptide (30 aa).

R30 carries the arginine amide modification.

This sequence belongs to the glucagon family.

The protein localises to the secreted. The sequence is that of Glucagon-like peptide from Anguilla anguilla (European freshwater eel).